Consider the following 297-residue polypeptide: uncharacterized protein (297 aa).

The first 24 residues, 1–24, serve as a signal peptide directing secretion; sequence MRAINKFLITVCIALLASVAVALG. The heme site is built by Cys58, Cys61, His62, Cys141, Cys144, His145, Cys167, Cys170, His171, Cys223, Cys226, His227, Cys264, Cys267, and His268. The interval 277–297 is disordered; the sequence is TNSVDTWSREGEGAEVQQLPH.

Post-translationally, binds 5 heme groups per subunit.

This is an uncharacterized protein from Archaeoglobus fulgidus (strain ATCC 49558 / DSM 4304 / JCM 9628 / NBRC 100126 / VC-16).